Consider the following 562-residue polypeptide: Dihydroxy-acid dehydratase (562 aa).

D80 contributes to the Mg(2+) binding site. C121 contributes to the [2Fe-2S] cluster binding site. Mg(2+) contacts are provided by D122 and K123. K123 is subject to N6-carboxylysine. [2Fe-2S] cluster is bound at residue C194. Position 446 (E446) interacts with Mg(2+). S472 serves as the catalytic Proton acceptor.

It belongs to the IlvD/Edd family. As to quaternary structure, homodimer. [2Fe-2S] cluster is required as a cofactor. The cofactor is Mg(2+).

It catalyses the reaction (2R)-2,3-dihydroxy-3-methylbutanoate = 3-methyl-2-oxobutanoate + H2O. The enzyme catalyses (2R,3R)-2,3-dihydroxy-3-methylpentanoate = (S)-3-methyl-2-oxopentanoate + H2O. Its pathway is amino-acid biosynthesis; L-isoleucine biosynthesis; L-isoleucine from 2-oxobutanoate: step 3/4. It functions in the pathway amino-acid biosynthesis; L-valine biosynthesis; L-valine from pyruvate: step 3/4. Functions in the biosynthesis of branched-chain amino acids. Catalyzes the dehydration of (2R,3R)-2,3-dihydroxy-3-methylpentanoate (2,3-dihydroxy-3-methylvalerate) into 2-oxo-3-methylpentanoate (2-oxo-3-methylvalerate) and of (2R)-2,3-dihydroxy-3-methylbutanoate (2,3-dihydroxyisovalerate) into 2-oxo-3-methylbutanoate (2-oxoisovalerate), the penultimate precursor to L-isoleucine and L-valine, respectively. The polypeptide is Dihydroxy-acid dehydratase (Staphylococcus aureus (strain Mu50 / ATCC 700699)).